Here is a 503-residue protein sequence, read N- to C-terminus: Glycerol kinase (503 aa).

Residue Thr-17 participates in ADP binding. 3 residues coordinate ATP: Thr-17, Thr-18, and Ser-19. A sn-glycerol 3-phosphate-binding site is contributed by Thr-17. Residue Arg-21 coordinates ADP. Residues Arg-87, Glu-88, Tyr-141, and Asp-245 each contribute to the sn-glycerol 3-phosphate site. Glycerol contacts are provided by Arg-87, Glu-88, Tyr-141, Asp-245, and Gln-246. Thr-267 and Gly-310 together coordinate ADP. ATP-binding residues include Thr-267, Gly-310, Gln-314, and Gly-411. Gly-411 and Asn-415 together coordinate ADP.

Belongs to the FGGY kinase family.

It carries out the reaction glycerol + ATP = sn-glycerol 3-phosphate + ADP + H(+). It functions in the pathway polyol metabolism; glycerol degradation via glycerol kinase pathway; sn-glycerol 3-phosphate from glycerol: step 1/1. Its activity is regulated as follows. Inhibited by fructose 1,6-bisphosphate (FBP). In terms of biological role, key enzyme in the regulation of glycerol uptake and metabolism. Catalyzes the phosphorylation of glycerol to yield sn-glycerol 3-phosphate. The sequence is that of Glycerol kinase from Pseudomonas tolaasii.